A 348-amino-acid chain; its full sequence is Protein RecA (348 aa).

Residue 71-78 participates in ATP binding; the sequence is GVESSGKT.

Belongs to the RecA family.

The protein resides in the cytoplasm. Functionally, can catalyze the hydrolysis of ATP in the presence of single-stranded DNA, the ATP-dependent uptake of single-stranded DNA by duplex DNA, and the ATP-dependent hybridization of homologous single-stranded DNAs. It interacts with LexA causing its activation and leading to its autocatalytic cleavage. The polypeptide is Protein RecA (Aquifex pyrophilus).